The following is a 345-amino-acid chain: Transcription factor MYB106 (345 aa).

HTH myb-type domains lie at 9 to 61 (KAGL…TNYL) and 62 to 116 (RPDI…KKRL). DNA-binding regions (H-T-H motif) lie at residues 37-61 (WRSL…TNYL) and 89-112 (WSAI…NTHL).

Expressed in trichomes, stems, carpels, petals and stamens.

It localises to the nucleus. In terms of biological role, functions as a repressor of epidermal cell outgrowth and negatively regulate trichome branch formation. Acts both as a positive and a negative regulator of cellular outgrowth. Promotes both trichome expansion and branch formation. Coordinately with WIN1/SHN1, participates in the regulation of cuticle biosynthesis and wax accumulation in reproductive organs and trichomes. Functions in cuticle nanoridge formation in petals and stamens, and in morphogenesis of petal conical cells and trichomes. May play a role in the regulation of cuticle formation in vegetative organs. The protein is Transcription factor MYB106 of Arabidopsis thaliana (Mouse-ear cress).